The following is a 515-amino-acid chain: Galactose/methyl galactoside import ATP-binding protein MglA (515 aa).

ABC transporter domains lie at 8–243 (LEMR…VGRE) and 254–499 (IPKE…AKYL). 40–47 (GENGAGKS) lines the ATP pocket.

The protein belongs to the ABC transporter superfamily. Galactose/methyl galactoside importer (TC 3.A.1.2.3) family. As to quaternary structure, the complex is composed of one ATP-binding protein (MglA), two transmembrane proteins (MglC) and a solute-binding protein (MglB).

The protein localises to the cell membrane. It carries out the reaction D-galactose(out) + ATP + H2O = D-galactose(in) + ADP + phosphate + H(+). It catalyses the reaction methyl beta-D-galactoside(out) + ATP + H2O = methyl beta-D-galactoside(in) + ADP + phosphate + H(+). Part of the ABC transporter complex MglABC involved in galactose/methyl galactoside import. Responsible for energy coupling to the transport system. The sequence is that of Galactose/methyl galactoside import ATP-binding protein MglA from Clostridium perfringens (strain ATCC 13124 / DSM 756 / JCM 1290 / NCIMB 6125 / NCTC 8237 / Type A).